The primary structure comprises 551 residues: Probable aldehyde dehydrogenase (551 aa).

Gly278–Ala283 provides a ligand contact to NAD(+). The active-site Proton acceptor is Glu297. The active-site Nucleophile is Cys332.

Belongs to the aldehyde dehydrogenase family. In terms of tissue distribution, in uninfected plants, highest levels found in stems. In plants infected with the flax rust, highest levels in leaves. Higher levels of expression in infected leaves than uninfected stems.

It carries out the reaction an aldehyde + NAD(+) + H2O = a carboxylate + NADH + 2 H(+). In terms of biological role, could be involved in facilitating the biotrophic relationship between the plant and the rust fungus. The protein is Probable aldehyde dehydrogenase (FIS1) of Linum usitatissimum (Flax).